Reading from the N-terminus, the 159-residue chain is Phosphopantetheine adenylyltransferase (159 aa).

Thr-10 is a substrate binding site. Residues 10–11 (TF) and His-18 contribute to the ATP site. Substrate contacts are provided by Lys-42, Met-74, and Arg-88. Residues 89–91 (GLR), Glu-99, and 124–130 (WSFISSS) contribute to the ATP site.

The protein belongs to the bacterial CoaD family. As to quaternary structure, homohexamer. The cofactor is Mg(2+).

It is found in the cytoplasm. The enzyme catalyses (R)-4'-phosphopantetheine + ATP + H(+) = 3'-dephospho-CoA + diphosphate. It participates in cofactor biosynthesis; coenzyme A biosynthesis; CoA from (R)-pantothenate: step 4/5. Functionally, reversibly transfers an adenylyl group from ATP to 4'-phosphopantetheine, yielding dephospho-CoA (dPCoA) and pyrophosphate. In Shigella sonnei (strain Ss046), this protein is Phosphopantetheine adenylyltransferase.